The primary structure comprises 561 residues: MAKWIVGSAWPYVNTVPHLGNLIGSVLSADVFARFLRLMGEDVVFVSGSDEHGTPIEVEARKRGVEPKELTDKVHEYVKKLFEKYLISFDNYTRTHNPVHMEFVRETFMKIYENGYIFTQEMVMPYCPKDKMFLPDRFTVGTCPYCGAPDARGDQCERCGKLLDPPDLVNPRCAFCGSRPVWRKTLHWFFDLPKAAEGLVEWLERSELPNNVKKFTLNWVKEGLTPRSVTRDNKWGIPAPFPGAEGKTIYVWFEAVLGYLSAVKELDVKNGTNLFEEFWKDINSRPVYFIGKDNIPFHSIILPALLKATGEEYPLPYNISATEYLMYEGQKFSKRRRVGVWIDEALEVVPNPDYWRFALIRMRPEERDTNFTWREFYRIVNSELNDDIGNFAHRVLTFVERRFGGSVRGRVDEEVKKSIAELHEKYVKAMYKVKLKEASGLVLEMARLGNKYLNEKEPWRLLKEGKEEEARDVMYTCLFILREVALHLAPFAPSAAEELWKMIGEPGSVHERGKLLTSGSEPAGEVKEPKPLFQKLPKDFLERVDELLEEARRKVEKLRPI.

Positions 11-21 (PYVNTVPHLGN) match the 'HIGH' region motif. Zn(2+) contacts are provided by cysteine 143, cysteine 146, cysteine 156, and cysteine 159. ATP is bound at residue lysine 334.

The protein belongs to the class-I aminoacyl-tRNA synthetase family. MetG type 1 subfamily. The cofactor is Zn(2+).

Its subcellular location is the cytoplasm. It carries out the reaction tRNA(Met) + L-methionine + ATP = L-methionyl-tRNA(Met) + AMP + diphosphate. In terms of biological role, is required not only for elongation of protein synthesis but also for the initiation of all mRNA translation through initiator tRNA(fMet) aminoacylation. This is Methionine--tRNA ligase from Ignicoccus hospitalis (strain KIN4/I / DSM 18386 / JCM 14125).